The primary structure comprises 103 residues: Co-chaperonin GroES (103 aa).

Belongs to the GroES chaperonin family. As to quaternary structure, heptamer of 7 subunits arranged in a ring. Interacts with the chaperonin GroEL.

It is found in the cytoplasm. Functionally, together with the chaperonin GroEL, plays an essential role in assisting protein folding. The GroEL-GroES system forms a nano-cage that allows encapsulation of the non-native substrate proteins and provides a physical environment optimized to promote and accelerate protein folding. GroES binds to the apical surface of the GroEL ring, thereby capping the opening of the GroEL channel. This is Co-chaperonin GroES from Prochlorococcus marinus (strain MIT 9215).